The primary structure comprises 176 residues: NAD(P)H-quinone oxidoreductase subunit J (176 aa).

The protein belongs to the complex I 30 kDa subunit family. In terms of assembly, NDH-1 can be composed of about 15 different subunits; different subcomplexes with different compositions have been identified which probably have different functions.

The protein localises to the cellular thylakoid membrane. The catalysed reaction is a plastoquinone + NADH + (n+1) H(+)(in) = a plastoquinol + NAD(+) + n H(+)(out). It carries out the reaction a plastoquinone + NADPH + (n+1) H(+)(in) = a plastoquinol + NADP(+) + n H(+)(out). Its function is as follows. NDH-1 shuttles electrons from an unknown electron donor, via FMN and iron-sulfur (Fe-S) centers, to quinones in the respiratory and/or the photosynthetic chain. The immediate electron acceptor for the enzyme in this species is believed to be plastoquinone. Couples the redox reaction to proton translocation, and thus conserves the redox energy in a proton gradient. Cyanobacterial NDH-1 also plays a role in inorganic carbon-concentration. The sequence is that of NAD(P)H-quinone oxidoreductase subunit J from Prochlorococcus marinus (strain MIT 9515).